We begin with the raw amino-acid sequence, 331 residues long: N-arachidonyl glycine receptor (331 aa).

Residues 1 to 26 (MATLSNHNQLDLSNGSHPEEYKIAAL) lie on the Extracellular side of the membrane. Asn14 carries an N-linked (GlcNAc...) asparagine glycan. A helical membrane pass occupies residues 27–47 (VFYSCIFLIGLFVNVTALWVF). The Cytoplasmic segment spans residues 48–56 (SCTTKKRTT). Residues 57-77 (VTIYMMNVALLDLVFILSLPF) traverse the membrane as a helical segment. Topologically, residues 78-95 (RMFYYAKGEWPFGEYFCH) are extracellular. A disulfide bridge links Cys94 with Cys172. Residues 96-116 (ILGALVVFYPSLALWLLAFIS) form a helical membrane-spanning segment. Residues 117–138 (ADRYMAIVQPKYAKELKNTGKA) are Cytoplasmic-facing. A helical membrane pass occupies residues 139-159 (VLACGGVWVMTLTTTVPLLLL). At 160–191 (YEDPDKASSPATCLKISDITHLKAVNVLNFTR) the chain is on the extracellular side. An N-linked (GlcNAc...) asparagine glycan is attached at Asn188. A helical transmembrane segment spans residues 192-212 (LIFFFLIPLFIMIGCYVVIIH). At 213–236 (SLLRGQTSKLKPKVKEKSIRIIMT) the chain is on the cytoplasmic side. A helical transmembrane segment spans residues 237-257 (LLLQVLVCFVPFHICFAVLML). Topologically, residues 258–268 (QGQENSYSPWG) are extracellular. Residues 269–289 (AFTTFLMNLSTCLDVVLYYIV) form a helical membrane-spanning segment. Residues 290 to 331 (SKQFQARVISVMLYRNYLRSVRRKSVRSGSLRSLSNMNSEML) are Cytoplasmic-facing. Ser322 carries the post-translational modification Phosphoserine.

Belongs to the G-protein coupled receptor 1 family. Expressed in the eye including cornea, retina, iris and ciliary epithelium (at protein level). Expressed in spleen, liver and lymphocytes with highest expression levels in intestinal intraepithelial lymphocytes.

The protein localises to the cell membrane. Its subcellular location is the cytoplasmic vesicle membrane. G protein-coupled receptor (GPCR) that plays a role in diverse physiological processes particularly within the immune and nervous systems. Becomes active when triggered by various endogenous ligands including endocannabinoid N-arachidonyl glycine (NAGly), delta-9-tetrahydrocannabinol or resolvin D2/RvD2 derived from the omega-3 fatty acid docosahexaenoic acid (DHA). Upon RvD2 binding, facilitates the resolution of inflammation, aiding in tissue repair and homeostasis. Mechanistically, RvD2 ligation initiates Galphas protein coupling, activation of cAMP-PKA signaling pathway and phosphorylation of STAT3, leading to RvD2-stimulated macrophage phagocytosis. Mediates NAGly-induced process of reorganization of actin filaments and induction of acrosomal exocytosis. Activation by N-arachidonoyl glycine (NAGly) can also induce apoptosis in macrophages. Plays a role in homeostasis of CD8+ subsets of intraepithelial lymphocytes (IELs) (CD8alphaalpha and CD8alphabeta IELs) in small intestine by supporting preferential migration of CD8alphaalpha T-cells to intraepithelial compartment over lamina propria compartment, and by mediating their reconstitution into small intestine after bone marrow transplant. Also participates in hypotensive responses, mediating reduction in intraocular and blood pressure. This chain is N-arachidonyl glycine receptor, found in Mus musculus (Mouse).